The sequence spans 167 residues: Small ribosomal subunit protein uS5 (167 aa).

In terms of domain architecture, S5 DRBM spans 12 to 75 (LQEKLVQVNR…DAARKNMITV (64 aa)).

It belongs to the universal ribosomal protein uS5 family. As to quaternary structure, part of the 30S ribosomal subunit. Contacts proteins S4 and S8.

In terms of biological role, with S4 and S12 plays an important role in translational accuracy. Functionally, located at the back of the 30S subunit body where it stabilizes the conformation of the head with respect to the body. In Hahella chejuensis (strain KCTC 2396), this protein is Small ribosomal subunit protein uS5.